The primary structure comprises 983 residues: Type IV secretion system protein CagE (983 aa).

597–604 (GSTGSGKT) serves as a coordination point for ATP.

This sequence belongs to the TrbE/VirB4 family. Component of the Cag type IV secretion system, which is composed of a wheel-shaped outer membrane complex (OMC) and an inner membrane complex (IMC). Interacts with CagV and CagBeta.

Its subcellular location is the cell inner membrane. The catalysed reaction is ATP + H2O + cellular proteinSide 1 = ADP + phosphate + cellular proteinSide 2.. Functionally, ATPase component of the type IV secretion system Cag (Cag-T4SS). Acts as a molecular motor to provide the energy that is required for the export of proteins. Required for CagA translocation and induction of IL-8 in host gastric epithelial cells. Plays a key role in Cag-T4SS pilus biogenesis, especially in the localization and stabilization of the pilus-associated components CagI, CagL and the surface protein CagH. Is also critical for assembly of the entire cytoplasmic portion of the Cag inner membrane complex (IMC). The sequence is that of Type IV secretion system protein CagE from Helicobacter pylori (strain ATCC 700392 / 26695) (Campylobacter pylori).